Consider the following 178-residue polypeptide: Flagellar transcriptional regulator FlhC (178 aa).

C138, C141, C158, and C161 together coordinate Zn(2+).

Belongs to the FlhC family. As to quaternary structure, heterohexamer composed of two FlhC and four FlhD subunits. Each FlhC binds a FlhD dimer, forming a heterotrimer, and a hexamer assembles by dimerization of two heterotrimers. It depends on Zn(2+) as a cofactor.

Its subcellular location is the cytoplasm. Functionally, functions in complex with FlhD as a master transcriptional regulator that regulates transcription of several flagellar and non-flagellar operons by binding to their promoter region. Activates expression of class 2 flagellar genes, including fliA, which is a flagellum-specific sigma factor that turns on the class 3 genes. Also regulates genes whose products function in a variety of physiological pathways. This Erwinia tasmaniensis (strain DSM 17950 / CFBP 7177 / CIP 109463 / NCPPB 4357 / Et1/99) protein is Flagellar transcriptional regulator FlhC.